The primary structure comprises 397 residues: uncharacterized protein (397 aa).

9 helical membrane-spanning segments follow: residues 1–21 (MGAS…LMLV), 39–59 (VIQS…VVVF), 76–96 (EALS…FGVP), 103–123 (VLLF…FVGA), 124–144 (ALIE…LVMA), 194–214 (MMTP…LFAF), 219–239 (ALFG…FSLL), 255–275 (LVYL…KLML), and 301–321 (QSLT…FWSA).

It belongs to the TerC family.

It is found in the cell membrane. This is an uncharacterized protein from Mycobacterium bovis (strain ATCC BAA-935 / AF2122/97).